The primary structure comprises 912 residues: DNA (cytosine-5)-methyltransferase 3A (912 aa).

Disordered regions lie at residues 1–178 (MPAM…GWES) and 221–286 (IAGM…EYED). Over residues 17-40 (AEREEDRKDGEEQEEPRGKEERQE) the composition is skewed to basic and acidic residues. Residues 47-57 (KVGRPGRKRKH) are compositionally biased toward basic residues. Residues 74–83 (KSPSMAQDSG) show a composition bias toward polar residues. Serine 105 is subject to Phosphoserine. Residues 113-128 (GAPAEGEGAAETLPEA) show a composition bias toward low complexity. Residue threonine 124 is modified to Phosphothreonine. Positions 149–167 (AGKEQKETNIESMKMEGSR) are enriched in basic and acidic residues. A Glycyl lysine isopeptide (Lys-Gly) (interchain with G-Cter in SUMO2) cross-link involves residue lysine 162. The residue at position 171 (arginine 171) is an Omega-N-methylarginine. The interval 199–403 (SKRKRDEWLA…DTAKAVEVQN (205 aa)) is interaction with DNMT1 and DNMT3B. A phosphoserine mark is found at serine 243 and serine 255. The span at 246 to 260 (AVQQPTDPASPTVAT) shows a compositional bias: polar residues. A Phosphothreonine modification is found at threonine 261. Serine 267 carries the post-translational modification Phosphoserine. Residues 269–279 (AGDKNATKAGD) are compositionally biased toward basic and acidic residues. The region spanning 292–350 (IGELVWGKLRGFSWWPGRIVSWWMTGRSRAAEGTRWVMWFGDGKFSVVCVEKLMPLSSF) is the PWWP domain. A phosphoserine mark is found at serine 390 and serine 393. The disordered stretch occupies residues 447–466 (AYAPPPPAKKPRKSTAEKPK). In terms of domain architecture, ADD spans 482 to 614 (EVRQKCRNIE…LQMFFANNHD (133 aa)). The GATA-type; atypical zinc finger occupies 493–523 (ICISCGSLNVTLEHPLFVGGMCQNCKNCFLE). Residues 494 to 586 (CISCGSLNVT…KEDPWNCYMC (93 aa)) are interaction with the PRC2/EED-EZH2 complex. The PHD-type; atypical zinc finger occupies 534-590 (QSYCTICCGGREVLMCGNNNCCRCFCVECVDLLVGPGAAQAAIKEDPWNCYMCGHKG). In terms of domain architecture, SAM-dependent MTase C5-type spans 634–912 (IRVLSLFDGI…APLKEYFACV (279 aa)). S-adenosyl-L-methionine is bound by residues 641–645 (DGIAT), glutamate 664, and 686–688 (DVR). Cysteine 710 is an active-site residue. S-methylcysteine; by autocatalysis is present on cysteine 710. An S-adenosyl-L-methionine-binding site is contributed by 891–893 (RSW).

The protein belongs to the class I-like SAM-binding methyltransferase superfamily. C5-methyltransferase family. Heterotetramer composed of 1 DNMT3A homodimer and 2 DNMT3L subunits (DNMT3L-DNMT3A-DNMT3A-DNMT3L). Interacts with UBC9, PIAS1 and PIAS2. Binds the ZBTB18 transcriptional repressor. Interacts with SETDB1. Associates with HDAC1 through its ADD domain. Interacts with UHRF1. Interacts with DNMT1 and DNMT3B. Interacts with the PRC2/EED-EZH2 complex. Interacts with MPHOSPH8. Interacts with histone H3 that is not methylated at 'Lys-4' (H3K4). Interacts with SPOCD1. Interacts with ZNF263; recruited to the SIX3 promoter along with other proteins involved in chromatin modification and transcriptional corepression where it contributes to transcriptional repression. Post-translationally, sumoylated; sumoylation disrupts the ability to interact with histone deacetylases (HDAC1 and HDAC2) and repress transcription. Auto-methylated at Cys-710: auto-methylation takes place in absence of DNA substrate and inactivates the DNA methyltransferase activity. Inactivation by auto-methylation may be used to inactivate unused DNA methyltransferases in the cell. As to expression, highly expressed in fetal tissues, skeletal muscle, heart, peripheral blood mononuclear cells, kidney, and at lower levels in placenta, brain, liver, colon, spleen, small intestine and lung.

The protein localises to the nucleus. It localises to the chromosome. The protein resides in the cytoplasm. It carries out the reaction a 2'-deoxycytidine in DNA + S-adenosyl-L-methionine = a 5-methyl-2'-deoxycytidine in DNA + S-adenosyl-L-homocysteine + H(+). The catalysed reaction is L-cysteinyl-[protein] + S-adenosyl-L-methionine = S-methyl-L-cysteinyl-[protein] + S-adenosyl-L-homocysteine + H(+). Activated by binding to the regulatory factor DNMT3L. Auto-methylation at Cys-710 in absence of DNA inactivates the DNA methyltransferase activity. Its function is as follows. Required for genome-wide de novo methylation and is essential for the establishment of DNA methylation patterns during development. DNA methylation is coordinated with methylation of histones. It modifies DNA in a non-processive manner and also methylates non-CpG sites. May preferentially methylate DNA linker between 2 nucleosomal cores and is inhibited by histone H1. Plays a role in paternal and maternal imprinting. Required for methylation of most imprinted loci in germ cells. Acts as a transcriptional corepressor for ZBTB18. Recruited to trimethylated 'Lys-36' of histone H3 (H3K36me3) sites. Can actively repress transcription through the recruitment of HDAC activity. Also has weak auto-methylation activity on Cys-710 in absence of DNA. In Homo sapiens (Human), this protein is DNA (cytosine-5)-methyltransferase 3A (DNMT3A).